A 96-amino-acid chain; its full sequence is Integration host factor subunit beta (96 aa).

Belongs to the bacterial histone-like protein family. Heterodimer of an alpha and a beta chain.

This protein is one of the two subunits of integration host factor, a specific DNA-binding protein that functions in genetic recombination as well as in transcriptional and translational control. The chain is Integration host factor subunit beta from Dichelobacter nodosus (strain VCS1703A).